We begin with the raw amino-acid sequence, 256 residues long: 5'-nucleotidase SurE (256 aa).

Asp8, Asp9, Ser39, and Asn91 together coordinate a divalent metal cation.

This sequence belongs to the SurE nucleotidase family. Requires a divalent metal cation as cofactor.

The protein resides in the cytoplasm. The enzyme catalyses a ribonucleoside 5'-phosphate + H2O = a ribonucleoside + phosphate. In terms of biological role, nucleotidase that shows phosphatase activity on nucleoside 5'-monophosphates. The protein is 5'-nucleotidase SurE of Marinobacter nauticus (strain ATCC 700491 / DSM 11845 / VT8) (Marinobacter aquaeolei).